The primary structure comprises 482 residues: Transcription termination/antitermination protein NusA (482 aa).

The 65-residue stretch at 133–197 folds into the S1 motif domain; the sequence is NKVVIGYVQQ…NGIEVILSRT (65 aa). Residues 300–446 enclose the KH domain; it reads LHKALVVVSD…NDNDESMEKV (147 aa).

It belongs to the NusA family. In terms of assembly, monomer. Binds directly to the core enzyme of the DNA-dependent RNA polymerase and to nascent RNA.

The protein localises to the cytoplasm. In terms of biological role, participates in both transcription termination and antitermination. This Borreliella burgdorferi (strain ATCC 35210 / DSM 4680 / CIP 102532 / B31) (Borrelia burgdorferi) protein is Transcription termination/antitermination protein NusA.